A 141-amino-acid chain; its full sequence is Large ribosomal subunit protein uL11 (141 aa).

It belongs to the universal ribosomal protein uL11 family. In terms of assembly, part of the ribosomal stalk of the 50S ribosomal subunit. Interacts with L10 and the large rRNA to form the base of the stalk. L10 forms an elongated spine to which L12 dimers bind in a sequential fashion forming a multimeric L10(L12)X complex. Post-translationally, one or more lysine residues are methylated.

Forms part of the ribosomal stalk which helps the ribosome interact with GTP-bound translation factors. This chain is Large ribosomal subunit protein uL11, found in Chlorobaculum tepidum (strain ATCC 49652 / DSM 12025 / NBRC 103806 / TLS) (Chlorobium tepidum).